Here is a 108-residue protein sequence, read N- to C-terminus: Small ribosomal subunit protein bS6 (108 aa).

Belongs to the bacterial ribosomal protein bS6 family.

Functionally, binds together with bS18 to 16S ribosomal RNA. This Dichelobacter nodosus (strain VCS1703A) protein is Small ribosomal subunit protein bS6.